A 1229-amino-acid polypeptide reads, in one-letter code: uncharacterized protein (1229 aa).

A signal peptide spans M1 to S19. 6 N-linked (GlcNAc...) asparagine glycosylation sites follow: N238, N270, N370, N538, N691, and N701. The region spanning R678–N813 is the Galectin 1 domain. Residues H818 to E829 are compositionally biased toward polar residues. The tract at residues H818–N903 is disordered. Residues T830–T846 show a composition bias toward low complexity. A compositionally biased stretch (polar residues) spans E847–L869. Over residues T870–P901 the composition is skewed to low complexity. N903, N938, and N948 each carry an N-linked (GlcNAc...) asparagine glycan. The Galectin 2 domain maps to R925–A1059. A disordered region spans residues V1061–L1087. Over residues P1067–L1087 the composition is skewed to low complexity. N1146 carries an N-linked (GlcNAc...) asparagine glycan.

This is an uncharacterized protein from Caenorhabditis elegans.